Consider the following 345-residue polypeptide: Uroporphyrinogen decarboxylase (345 aa).

Substrate-binding positions include 26–30 (RQAGR), F45, D75, Y151, S206, and H320.

It belongs to the uroporphyrinogen decarboxylase family. As to quaternary structure, homodimer.

The protein resides in the cytoplasm. It catalyses the reaction uroporphyrinogen III + 4 H(+) = coproporphyrinogen III + 4 CO2. Its pathway is porphyrin-containing compound metabolism; protoporphyrin-IX biosynthesis; coproporphyrinogen-III from 5-aminolevulinate: step 4/4. In terms of biological role, catalyzes the decarboxylation of four acetate groups of uroporphyrinogen-III to yield coproporphyrinogen-III. The protein is Uroporphyrinogen decarboxylase of Staphylococcus carnosus (strain TM300).